A 481-amino-acid polypeptide reads, in one-letter code: 1-acylglycerol-3-phosphate O-acyltransferase PNPLA3 (481 aa).

Residues M1–R41 are Cytoplasmic-facing. Residues L10–K179 form the PNPLA domain. The short motif at G14 to G19 is the GXGXXG element. A helical; Signal-anchor for type II membrane protein membrane pass occupies residues M42–L62. The GXSXG motif lies at G45 to G49. The active-site Nucleophile is S47. Residues E63–L481 are Lumenal-facing. Residue N89 is glycosylated (N-linked (GlcNAc...) asparagine). The active-site Proton acceptor is D166. The short motif at D166 to G168 is the DGA/G element. An N-linked (GlcNAc...) asparagine glycan is attached at N280.

It is found in the membrane. It localises to the lipid droplet. It catalyses the reaction a 1-acyl-sn-glycero-3-phosphate + an acyl-CoA = a 1,2-diacyl-sn-glycero-3-phosphate + CoA. The enzyme catalyses a triacylglycerol + H2O = a diacylglycerol + a fatty acid + H(+). It carries out the reaction a 1-acylglycerol + a 1,3-diacylglycerol = a triacylglycerol + glycerol. The catalysed reaction is a 1-acylglycerol + a 1,2-diacylglycerol = a triacylglycerol + glycerol. It catalyses the reaction 2 a 1-acylglycerol = a 1,2-diacylglycerol + glycerol. The enzyme catalyses 1-(9Z-octadecenoyl)-sn-glycero-3-phosphate + (9Z)-octadecenoyl-CoA = 1,2-di-(9Z-octadecenoyl)-sn-glycero-3-phosphate + CoA. It carries out the reaction 1-(9Z-octadecenoyl)-sn-glycero-3-phosphate + hexadecanoyl-CoA = 1-(9Z)-octadecenoyl-2-hexadecanoyl-sn-glycero-3-phosphate + CoA. The catalysed reaction is 1-(9Z-octadecenoyl)-sn-glycero-3-phosphate + (9Z,12Z)-octadecadienoyl-CoA = 1-(9Z)-octadecenoyl-2-(9Z,12Z)-octadecadienoyl-sn-glycero-3-phosphate + CoA. It catalyses the reaction 1-(9Z-octadecenoyl)-sn-glycero-3-phosphate + (5Z,8Z,11Z,14Z)-eicosatetraenoyl-CoA = 1-(9Z)-octadecenoyl-2-(5Z,8Z,11Z,14Z)-eicosatetraenoyl-sn-glycero-3-phosphate + CoA. The enzyme catalyses 2 1-(9Z-octadecenoyl)-glycerol = 1,2-di-(9Z-octadecenoyl)-glycerol + glycerol. It carries out the reaction 1-(9Z-octadecenoyl)-glycerol + 1,2-di-(9Z-octadecenoyl)-glycerol = 1,2,3-tri-(9Z-octadecenoyl)-glycerol + glycerol. The catalysed reaction is 1-(9Z-octadecenoyl)-glycerol + 1,3-di-(9Z-octadecenoyl)-glycerol = 1,2,3-tri-(9Z-octadecenoyl)-glycerol + glycerol. It catalyses the reaction 1,2,3-tri-(9Z-octadecenoyl)-glycerol + H2O = 1,3-di-(9Z-octadecenoyl)-glycerol + (9Z)-octadecenoate + H(+). The enzyme catalyses a 1,2-diacyl-sn-glycero-3-phosphocholine + H2O = a 1-acyl-sn-glycero-3-phosphocholine + a fatty acid + H(+). It functions in the pathway phospholipid metabolism. It participates in glycerolipid metabolism. With respect to regulation, the triglyceride lipase activity is inhibited by BEL ((E)-6-(bromomethylene)-3-(1-naphthalenyl)-2H-tetrahydropyran-2-one), a suicide substrate inhibitor. Its function is as follows. Specifically catalyzes coenzyme A (CoA)-dependent acylation of 1-acyl-sn-glycerol 3-phosphate (2-lysophosphatidic acid/LPA) to generate phosphatidic acid (PA), an important metabolic intermediate and precursor for both triglycerides and glycerophospholipids. Does not esterify other lysophospholipids. Acyl donors are long chain (at least C16) fatty acyl-CoAs: arachidonoyl-CoA, linoleoyl-CoA, oleoyl-CoA and at a lesser extent palmitoyl-CoA. Additionally possesses low triacylglycerol lipase and CoA-independent acylglycerol transacylase activities and thus may play a role in acyl-chain remodeling of triglycerides. In vitro may express hydrolytic activity against glycerolipids triacylglycerol, diacylglycerol and monoacylglycerol, with a strong preference for oleic acid as the acyl moiety. However, the triacylglycerol hydrolase activity is controversial and may be very low. Possesses phospholipase A2 activity. The protein is 1-acylglycerol-3-phosphate O-acyltransferase PNPLA3 of Homo sapiens (Human).